The sequence spans 273 residues: Putative pyruvate, phosphate dikinase regulatory protein (273 aa).

149–156 serves as a coordination point for ADP; that stretch reads GPSRTSKT.

Belongs to the pyruvate, phosphate/water dikinase regulatory protein family. PDRP subfamily.

It carries out the reaction N(tele)-phospho-L-histidyl/L-threonyl-[pyruvate, phosphate dikinase] + ADP = N(tele)-phospho-L-histidyl/O-phospho-L-threonyl-[pyruvate, phosphate dikinase] + AMP + H(+). It catalyses the reaction N(tele)-phospho-L-histidyl/O-phospho-L-threonyl-[pyruvate, phosphate dikinase] + phosphate + H(+) = N(tele)-phospho-L-histidyl/L-threonyl-[pyruvate, phosphate dikinase] + diphosphate. In terms of biological role, bifunctional serine/threonine kinase and phosphorylase involved in the regulation of the pyruvate, phosphate dikinase (PPDK) by catalyzing its phosphorylation/dephosphorylation. This chain is Putative pyruvate, phosphate dikinase regulatory protein, found in Rickettsia akari (strain Hartford).